Consider the following 161-residue polypeptide: uncharacterized protein (161 aa).

Positions 1–35 are cleaved as a signal peptide; it reads MVMAMGFDTVVAAIMATAIIVAVAYTFLAGSTSIA.

This is an uncharacterized protein from Archaeoglobus fulgidus (strain ATCC 49558 / DSM 4304 / JCM 9628 / NBRC 100126 / VC-16).